Here is a 91-residue protein sequence, read N- to C-terminus: Small ribosomal subunit protein uS19 (91 aa).

Belongs to the universal ribosomal protein uS19 family.

In terms of biological role, protein S19 forms a complex with S13 that binds strongly to the 16S ribosomal RNA. This chain is Small ribosomal subunit protein uS19, found in Lactobacillus delbrueckii subsp. bulgaricus (strain ATCC 11842 / DSM 20081 / BCRC 10696 / JCM 1002 / NBRC 13953 / NCIMB 11778 / NCTC 12712 / WDCM 00102 / Lb 14).